The chain runs to 336 residues: Plant-specific TFIIB-related protein 2 (336 aa).

The TFIIB-type zinc finger occupies 2-34 (EEETCLDCKRPTIMVVDHSSGDTICSECGLVLE). Zn(2+) contacts are provided by Cys-6, Cys-9, Cys-26, and Cys-29.

In terms of tissue distribution, specifically expressed in reproductive organs and seeds.

It is found in the nucleus. Plant-specific TFIIB-related protein involved in the regulation of endosperm proliferation during the syncytial phase of endosperm development. Does not contribute to RNA polymerase IV or V activities in reproductive tissues. In Arabidopsis thaliana (Mouse-ear cress), this protein is Plant-specific TFIIB-related protein 2.